The primary structure comprises 139 residues: MMQSTFAIIKPDAVSRQLTGEILAAMEASGLKIVALKRLHLSKAQAAGFYAVHRERPFFDSLTDYMSSGPVVCVVLRGEDAVPRWRALMGATNPAQAEPGTLRARYGQSLEANAVHGSDAQETAAFEIGYFFNGLEISE.

6 residues coordinate ATP: Lys10, Phe58, Arg86, Thr92, Arg103, and Asn113. Catalysis depends on His116, which acts as the Pros-phosphohistidine intermediate.

Belongs to the NDK family. In terms of assembly, homotetramer. Requires Mg(2+) as cofactor.

Its subcellular location is the cytoplasm. The enzyme catalyses a 2'-deoxyribonucleoside 5'-diphosphate + ATP = a 2'-deoxyribonucleoside 5'-triphosphate + ADP. The catalysed reaction is a ribonucleoside 5'-diphosphate + ATP = a ribonucleoside 5'-triphosphate + ADP. In terms of biological role, major role in the synthesis of nucleoside triphosphates other than ATP. The ATP gamma phosphate is transferred to the NDP beta phosphate via a ping-pong mechanism, using a phosphorylated active-site intermediate. This Desulfovibrio desulfuricans (strain ATCC 27774 / DSM 6949 / MB) protein is Nucleoside diphosphate kinase.